Reading from the N-terminus, the 59-residue chain is Photosystem II reaction center protein K (59 aa).

Positions 1 to 22 (MILYSHLSTLIDIDLSNNIFLA) are excised as a propeptide. The chain crosses the membrane as a helical span at residues 30 to 50 (IFDPLVDVMPVIPVFFLLLAF).

Belongs to the PsbK family. As to quaternary structure, PSII is composed of 1 copy each of membrane proteins PsbA, PsbB, PsbC, PsbD, PsbE, PsbF, PsbH, PsbI, PsbJ, PsbK, PsbL, PsbM, PsbT, PsbX, PsbY, PsbZ, Psb30/Ycf12, at least 3 peripheral proteins of the oxygen-evolving complex and a large number of cofactors. It forms dimeric complexes.

Its subcellular location is the plastid. It localises to the chloroplast thylakoid membrane. In terms of biological role, one of the components of the core complex of photosystem II (PSII). PSII is a light-driven water:plastoquinone oxidoreductase that uses light energy to abstract electrons from H(2)O, generating O(2) and a proton gradient subsequently used for ATP formation. It consists of a core antenna complex that captures photons, and an electron transfer chain that converts photonic excitation into a charge separation. The sequence is that of Photosystem II reaction center protein K from Chara vulgaris (Common stonewort).